A 356-amino-acid polypeptide reads, in one-letter code: Phenylalanine dehydrogenase (356 aa).

Arg-43 contacts NAD(+). Lys-67 lines the L-phenylalanine pocket. Catalysis depends on Lys-79, which acts as the Proton donor/acceptor. Pro-118–Asp-119 serves as a coordination point for L-phenylalanine. Residues Asp-119, Ser-150, Thr-154, Gly-183–Gly-189, Asp-206–Thr-207, Arg-211, Ala-240–Met-241, and Ala-261–Asn-263 contribute to the NAD(+) site. Asn-263 contributes to the L-phenylalanine binding site.

The protein belongs to the Glu/Leu/Phe/Val dehydrogenases family. As to quaternary structure, homotetramer, dimer of dimers.

The enzyme catalyses L-phenylalanine + NAD(+) + H2O = 3-phenylpyruvate + NH4(+) + NADH + H(+). The protein operates within amino-acid biosynthesis; L-phenylalanine biosynthesis; L-phenylalanine from phenylpyruvate (PDH route): step 1/1. Subject to competitive inhibition by 3-phenylpropionate for the conversion of L-phenylalanine to phenylpyruvate. Subject to competitive inhibition by D-phenylalanine for the conversion of phenylpyruvate to L-phenylalanine. Functionally, catalyzes the reversible NAD(+)-dependent oxidative deamination of L-phenylalanine to phenylpyruvate. The sequence is that of Phenylalanine dehydrogenase from Rhodococcus sp.